A 276-amino-acid polypeptide reads, in one-letter code: MPELPEVEVTRRGIEPYVSGRKVERVEVRTPALRWPIPADLAKTLRGRVVRKVERRGKYLLFEIDAGWFIVHLGMTGTLRVLRHVPHPPAAAKHDHVDWIFDEFILRYRDPRRFGAVLWHPREAGDVLEHPLLAGLGVEPFSPAFSGALMHRLTRGRKVSVKQALLAGEIVVGVGNIYASESLFRAGIRPATAAGRVSLVRYDLLADAVRVTLAAAIEKGGSTLRDFVGSNGESGYFQLDYFVYDRAGLPCRVCGTPIKQIVQGQRSTYFCPTCQR.

P2 (schiff-base intermediate with DNA) is an active-site residue. E3 functions as the Proton donor in the catalytic mechanism. The active-site Proton donor; for beta-elimination activity is the K58. DNA-binding residues include H94, R112, and R157. An FPG-type zinc finger spans residues 242 to 276 (FVYDRAGLPCRVCGTPIKQIVQGQRSTYFCPTCQR). Catalysis depends on R266, which acts as the Proton donor; for delta-elimination activity.

This sequence belongs to the FPG family. As to quaternary structure, monomer. Requires Zn(2+) as cofactor.

It carries out the reaction Hydrolysis of DNA containing ring-opened 7-methylguanine residues, releasing 2,6-diamino-4-hydroxy-5-(N-methyl)formamidopyrimidine.. It catalyses the reaction 2'-deoxyribonucleotide-(2'-deoxyribose 5'-phosphate)-2'-deoxyribonucleotide-DNA = a 3'-end 2'-deoxyribonucleotide-(2,3-dehydro-2,3-deoxyribose 5'-phosphate)-DNA + a 5'-end 5'-phospho-2'-deoxyribonucleoside-DNA + H(+). Its function is as follows. Involved in base excision repair of DNA damaged by oxidation or by mutagenic agents. Acts as a DNA glycosylase that recognizes and removes damaged bases. Has a preference for oxidized purines, such as 7,8-dihydro-8-oxoguanine (8-oxoG). Has AP (apurinic/apyrimidinic) lyase activity and introduces nicks in the DNA strand. Cleaves the DNA backbone by beta-delta elimination to generate a single-strand break at the site of the removed base with both 3'- and 5'-phosphates. This Paraburkholderia xenovorans (strain LB400) protein is Formamidopyrimidine-DNA glycosylase.